Reading from the N-terminus, the 103-residue chain is U-scoloptoxin(24)-Er1a (103 aa).

A signal peptide spans 1–23 (MVKSLHCLIGIVLFLAILNAGNG).

This sequence belongs to the scoloptoxin-24 family. Contains 1 disulfide bond. In terms of tissue distribution, expressed by the venom gland.

Its subcellular location is the secreted. This chain is U-scoloptoxin(24)-Er1a, found in Ethmostigmus rubripes (Giant centipede).